We begin with the raw amino-acid sequence, 358 residues long: Methylthioribose-1-phosphate isomerase (358 aa).

Residues Arg-54–Ala-56, Arg-96, and Gln-205 contribute to the substrate site. Asp-246 (proton donor) is an active-site residue. Residue Asn-256 to Lys-257 participates in substrate binding.

This sequence belongs to the eIF-2B alpha/beta/delta subunits family. MtnA subfamily.

It catalyses the reaction 5-(methylsulfanyl)-alpha-D-ribose 1-phosphate = 5-(methylsulfanyl)-D-ribulose 1-phosphate. It functions in the pathway amino-acid biosynthesis; L-methionine biosynthesis via salvage pathway; L-methionine from S-methyl-5-thio-alpha-D-ribose 1-phosphate: step 1/6. Its function is as follows. Catalyzes the interconversion of methylthioribose-1-phosphate (MTR-1-P) into methylthioribulose-1-phosphate (MTRu-1-P). This is Methylthioribose-1-phosphate isomerase from Pseudomonas aeruginosa (strain UCBPP-PA14).